Reading from the N-terminus, the 51-residue chain is Ribosome biogenesis protein Nop10 (51 aa).

Belongs to the NOP10 family.

In terms of biological role, involved in ribosome biogenesis; more specifically in 18S rRNA pseudouridylation and in cleavage of pre-rRNA. The protein is Ribosome biogenesis protein Nop10 of Methanococcus maripaludis (strain C5 / ATCC BAA-1333).